The primary structure comprises 107 residues: MSSKVAINSDIGQALWAVEQLQMEAGIDQVKVRVGASAGGGKRWEHMGQGTGACLGLVWLNQLVCRCPKMAADLLKFCTEQAKNDPFLVGIPAATNSFKEKKPYAIL.

Residues 69–107 enclose the G protein gamma domain; sequence KMAADLLKFCTEQAKNDPFLVGIPAATNSFKEKKPYAIL.

Belongs to the G protein gamma family. G proteins are composed of 3 units; alpha, beta and gamma.

The protein resides in the cell membrane. Its function is as follows. Guanine nucleotide-binding proteins (G proteins) are involved as a modulator or transducer in various transmembrane signaling systems. The beta and gamma chains are required for the GTPase activity, for replacement of GDP by GTP, and for G protein-effector interaction. This chain is Guanine nucleotide-binding protein G(I)/G(S)/G(O) subunit gamma-14, found in Homo sapiens (Human).